Consider the following 688-residue polypeptide: Polyribonucleotide nucleotidyltransferase (688 aa).

2 residues coordinate Mg(2+): Asp484 and Asp490. Positions 550–609 (PTTEIFNVAPDKIVEIIGQGGRVIKEIVEKFEVKIDLNKPSGEVKIMGNKERVLKTKEFI) constitute a KH domain. Residues 626–688 (DEVLEAQVKR…NKGKIALDLA (63 aa)) enclose the S1 motif domain.

It belongs to the polyribonucleotide nucleotidyltransferase family. Requires Mg(2+) as cofactor.

Its subcellular location is the cytoplasm. It catalyses the reaction RNA(n+1) + phosphate = RNA(n) + a ribonucleoside 5'-diphosphate. Functionally, involved in mRNA degradation. Catalyzes the phosphorolysis of single-stranded polyribonucleotides processively in the 3'- to 5'-direction. The sequence is that of Polyribonucleotide nucleotidyltransferase from Helicobacter pylori (strain HPAG1).